The primary structure comprises 185 residues: MELVVQSRETDKKSVIKKIRQQGGIPAVLYSGGKSLANIVVDARVFSKFLSTLESGALASTVFTLSYEGREIKALVKDIQYHVTTYDVIHLDFEELVDGRDVRLNIPIRYINTVDCVGVKLGGSLRQVIRCIRVVCKPKDIVPFLELDVQSLGLSQTLKLSDICIPEGIRPVTSLKEVAVTVARR.

This sequence belongs to the bacterial ribosomal protein bL25 family. CTC subfamily. Part of the 50S ribosomal subunit; part of the 5S rRNA/L5/L18/L25 subcomplex. Contacts the 5S rRNA. Binds to the 5S rRNA independently of L5 and L18.

Functionally, this is one of the proteins that binds to the 5S RNA in the ribosome where it forms part of the central protuberance. In Chlamydia trachomatis serovar A (strain ATCC VR-571B / DSM 19440 / HAR-13), this protein is Large ribosomal subunit protein bL25.